Consider the following 296-residue polypeptide: Arginase (296 aa).

Mn(2+) is bound by residues H97, D120, H122, and D124. Residues 122 to 126 (HGDLN), 133 to 135 (SGN), and D176 each bind substrate. Positions 223 and 225 each coordinate Mn(2+). Positions 237 and 268 each coordinate substrate.

This sequence belongs to the arginase family. The cofactor is Mn(2+).

It carries out the reaction L-arginine + H2O = urea + L-ornithine. The protein operates within nitrogen metabolism; urea cycle; L-ornithine and urea from L-arginine: step 1/1. In terms of biological role, involved in the catabolism of arginine. The protein is Arginase of Bacillus subtilis (strain 168).